The chain runs to 2552 residues: Protein TIC 214 (2552 aa).

6 consecutive transmembrane segments (helical) span residues 15-35 (LIFGIFYGILITFSKLTSYLF), 54-74 (LSYGFTVGHLLGYLLIYYLPF), 78-98 (LSNFYLKIILALGLMLYQFFW), 119-136 (TLAFVYGLSYRLLNYTFF), 154-174 (FKILFLYTTFFVWMIGHLICI), and 243-263 (ILATILFIVALYLLGKSPIPF). Residues 304–325 (EEQKKDEKSADEEKKRAVEEEN) are disordered. The segment covering 305-322 (EQKKDEKSADEEKKRAVE) has biased composition (basic and acidic residues). 3 helical membrane-spanning segments follow: residues 362–382 (TLYTFFSDCFFESFSFYAFLF), 423–443 (PFLVVVKPFYLYFFNFFSVYI), and 452–472 (FLFNHNFVFSAIFRGFSHFFF). Residues 2045-2077 (MKAEEQKKIDEEYEEKKEKRKKEQEEQGKAFDE) are disordered. A coiled-coil region spans residues 2416–2511 (RRRRQLRIVN…IKKKLMRLRF (96 aa)).

Belongs to the TIC214 family. As to quaternary structure, part of the Tic complex.

The protein localises to the plastid. The protein resides in the chloroplast inner membrane. Its function is as follows. Involved in protein precursor import into chloroplasts. May be part of an intermediate translocation complex acting as a protein-conducting channel at the inner envelope. This chain is Protein TIC 214, found in Pelargonium hortorum (Common geranium).